The sequence spans 130 residues: Small ribosomal subunit protein uS11c (130 aa).

The protein belongs to the universal ribosomal protein uS11 family. As to quaternary structure, part of the 30S ribosomal subunit.

The protein localises to the plastid. It is found in the chloroplast. In Spirogyra maxima (Green alga), this protein is Small ribosomal subunit protein uS11c.